The chain runs to 600 residues: Elongation factor 4 (600 aa).

The 183-residue stretch at 5–187 folds into the tr-type G domain; that stretch reads SRIRNFSIIA…DLIKKIPPPK (183 aa). GTP contacts are provided by residues 17-22 and 134-137; these read DHGKST and NKMD.

The protein belongs to the TRAFAC class translation factor GTPase superfamily. Classic translation factor GTPase family. LepA subfamily.

It is found in the cell inner membrane. It carries out the reaction GTP + H2O = GDP + phosphate + H(+). In terms of biological role, required for accurate and efficient protein synthesis under certain stress conditions. May act as a fidelity factor of the translation reaction, by catalyzing a one-codon backward translocation of tRNAs on improperly translocated ribosomes. Back-translocation proceeds from a post-translocation (POST) complex to a pre-translocation (PRE) complex, thus giving elongation factor G a second chance to translocate the tRNAs correctly. Binds to ribosomes in a GTP-dependent manner. The protein is Elongation factor 4 of Marinobacter nauticus (strain ATCC 700491 / DSM 11845 / VT8) (Marinobacter aquaeolei).